Here is a 450-residue protein sequence, read N- to C-terminus: Regulator of sigma E protease (450 aa).

Zn(2+) is bound at residue His22. Glu23 is a catalytic residue. Residue His26 coordinates Zn(2+). A helical membrane pass occupies residues 98–120 (AAIIAAGPVANFIFAIFAYWLVF). 2 PDZ domains span residues 115–186 (AYWL…APFG) and 199–291 (HWAF…TPDT). The next 2 membrane-spanning stretches (helical) occupy residues 376-398 (VIYY…LFPL) and 426-445 (FSYR…ALFN).

It belongs to the peptidase M50B family. In terms of assembly, interacts with RseA. Zn(2+) is required as a cofactor.

Its subcellular location is the cell inner membrane. Functionally, a site-2 regulated intramembrane protease (S2P) that cleaves the peptide bond between 'Ala-108' and 'Cys-109' in the transmembrane region of RseA. Part of a regulated intramembrane proteolysis (RIP) cascade. Acts on DegS-cleaved RseA to release the cytoplasmic domain of RseA. This provides the cell with sigma-E (RpoE) activity through the proteolysis of RseA. The protein is Regulator of sigma E protease (rseP) of Salmonella typhi.